Here is a 180-residue protein sequence, read N- to C-terminus: Ribulose bisphosphate carboxylase small subunit, chloroplastic 1 (180 aa).

The N-terminal 56 residues, 1–56 (MASSVLSSAAVATRSNVAQANMVAPFTGLKSAASFPVSRKQNLDITSIASNGGRVQ), are a transit peptide targeting the chloroplast.

It belongs to the RuBisCO small chain family. As to quaternary structure, heterohexadecamer of 8 large and 8 small subunits.

The protein resides in the plastid. It is found in the chloroplast. RuBisCO catalyzes two reactions: the carboxylation of D-ribulose 1,5-bisphosphate, the primary event in carbon dioxide fixation, as well as the oxidative fragmentation of the pentose substrate. Both reactions occur simultaneously and in competition at the same active site. Although the small subunit is not catalytic it is essential for maximal activity. In Nicotiana sylvestris (Wood tobacco), this protein is Ribulose bisphosphate carboxylase small subunit, chloroplastic 1.